A 249-amino-acid polypeptide reads, in one-letter code: uncharacterized protein (249 aa).

11-34 provides a ligand contact to NADP(+); the sequence is IFGGRSQIGGELARRLAAGATMVL. S142 contributes to the substrate binding site. Y155 serves as the catalytic Proton acceptor.

The protein belongs to the short-chain dehydrogenases/reductases (SDR) family.

This is an uncharacterized protein from Mycobacterium tuberculosis (strain ATCC 25618 / H37Rv).